The primary structure comprises 295 residues: MKQKFKRAILYARQHRANQEVNESLHRLVDFLSTQDIEIFQDSDTAASFELKAPVLPREKMGAKHDLIIVVGGDGSLLSASRMAIKVNTPVIGINRGRLGFLTDILPQDIESHLGPVLNGQYNEEERFLLHTKIYDKENSYFEGDALNDVVLGRGSETHLIEFDVYINQQLVSHYRSDGMILSTPTGSTAYALSAGGPIMHPQLNAIVLVPMFSHSLSSRPLVIDGEAEIELYISKSNETDLRISCDGHESRVVKPGQKVAVKKNGNRLRLLHPLDYHYYDTLRSKLGWESKHQG.

Asp-74 serves as the catalytic Proton acceptor. Residues 74-75 (DG), 148-149 (ND), His-159, Arg-176, Asp-178, and 189-194 (TAYALS) contribute to the NAD(+) site.

It belongs to the NAD kinase family. The cofactor is a divalent metal cation.

The protein localises to the cytoplasm. It carries out the reaction NAD(+) + ATP = ADP + NADP(+) + H(+). Functionally, involved in the regulation of the intracellular balance of NAD and NADP, and is a key enzyme in the biosynthesis of NADP. Catalyzes specifically the phosphorylation on 2'-hydroxyl of the adenosine moiety of NAD to yield NADP. The polypeptide is NAD kinase (Legionella pneumophila (strain Paris)).